The sequence spans 175 residues: NADH-ubiquinone oxidoreductase chain 6 (175 aa).

A run of 5 helical transmembrane segments spans residues 1–21, 25–45, 47–67, 88–108, and 149–169; these read MMMY…VGVS, SPIY…GVIL, FGGS…MLVV, VVLG…IYAL, and YGVW…VIIM.

The protein belongs to the complex I subunit 6 family. In terms of assembly, core subunit of respiratory chain NADH dehydrogenase (Complex I) which is composed of 45 different subunits.

The protein resides in the mitochondrion inner membrane. It catalyses the reaction a ubiquinone + NADH + 5 H(+)(in) = a ubiquinol + NAD(+) + 4 H(+)(out). Core subunit of the mitochondrial membrane respiratory chain NADH dehydrogenase (Complex I) which catalyzes electron transfer from NADH through the respiratory chain, using ubiquinone as an electron acceptor. Essential for the catalytic activity and assembly of complex I. This chain is NADH-ubiquinone oxidoreductase chain 6 (MT-ND6), found in Balaenoptera physalus (Fin whale).